A 340-amino-acid chain; its full sequence is Ketol-acid reductoisomerase (NADP(+)) (340 aa).

The region spanning 2–181 (VKMYYEADVK…GCTKAGVIET (180 aa)) is the KARI N-terminal Rossmann domain. Residues 25–28 (YGSQ), R48, S52, and 82–85 (DERQ) each bind NADP(+). H107 is a catalytic residue. Residue G133 participates in NADP(+) binding. A KARI C-terminal knotted domain is found at 182-327 (SFREETETDL…EQLRGMMSWI (146 aa)). Positions 190, 194, 226, and 230 each coordinate Mg(2+). Residue S251 coordinates substrate.

The protein belongs to the ketol-acid reductoisomerase family. It depends on Mg(2+) as a cofactor.

The catalysed reaction is (2R)-2,3-dihydroxy-3-methylbutanoate + NADP(+) = (2S)-2-acetolactate + NADPH + H(+). It carries out the reaction (2R,3R)-2,3-dihydroxy-3-methylpentanoate + NADP(+) = (S)-2-ethyl-2-hydroxy-3-oxobutanoate + NADPH + H(+). It functions in the pathway amino-acid biosynthesis; L-isoleucine biosynthesis; L-isoleucine from 2-oxobutanoate: step 2/4. It participates in amino-acid biosynthesis; L-valine biosynthesis; L-valine from pyruvate: step 2/4. Its function is as follows. Involved in the biosynthesis of branched-chain amino acids (BCAA). Catalyzes an alkyl-migration followed by a ketol-acid reduction of (S)-2-acetolactate (S2AL) to yield (R)-2,3-dihydroxy-isovalerate. In the isomerase reaction, S2AL is rearranged via a Mg-dependent methyl migration to produce 3-hydroxy-3-methyl-2-ketobutyrate (HMKB). In the reductase reaction, this 2-ketoacid undergoes a metal-dependent reduction by NADPH to yield (R)-2,3-dihydroxy-isovalerate. In Brevibacillus brevis (strain 47 / JCM 6285 / NBRC 100599), this protein is Ketol-acid reductoisomerase (NADP(+)).